Reading from the N-terminus, the 1029-residue chain is Protein SUPPRESSOR OF PHYA-105 1 (1029 aa).

Residues 42-69 (SETANSDCPGSSAHRNVDLTKPPPPEEA) form a disordered region. A Protein kinase domain is found at 188–529 (VQMKTPVSSS…ARDILKSELI (342 aa)). Residues 194-202 (VSSSNFSQL) and lysine 216 each bind ATP. Residues 213 to 269 (VVGKNQETPPEFVSDQDLGSKEKKLDISKSPTPHDVLPLKSSPKGNGMVSHGDGNHS) are disordered. Residues 230–239 (LGSKEKKLDI) are compositionally biased toward basic and acidic residues. The active-site Proton acceptor is aspartate 316. The segment at 347-392 (EDLNRRRPVVEESSSGGRDSKKRKMDLHLNSPGNQLQATSTGRPFK) is disordered. Residues 377 to 388 (SPGNQLQATSTG) are compositionally biased toward polar residues. A coiled-coil region spans residues 557-589 (VQKKKKASKLLQDIQTLEDDIKEAERRYSSNVS). The segment at 653 to 679 (ARSDKTLKDRDRCSENQNENQDMSTKG) is disordered. Basic and acidic residues predominate over residues 654–666 (RSDKTLKDRDRCS). Positions 667-679 (ENQNENQDMSTKG) are enriched in polar residues. 7 WD repeats span residues 714–753 (NSASVVCSLSFDPDEEHIAAAGISKKIKIFDFNAFMNESV), 763–803 (VNKS…GFSQ), 806–846 (EHQK…SLGT), 848–888 (WSPA…TPWC), 892–930 (GHEKAVSYVKFMDSETIVSASTDNSLKLWNLNKTNSSGL), 932–971 (PGACSLTYKGHTNQKNFVGLSVLDGYIACGSETNEVYSYY), and 997–1029 (DNGQFVSSVCWRKKSNMLVAANSTGNMKLLKLV). The DWD box motif lies at 866–881 (LAFGSADYKVYCYDLR).

Interacts with CO, COP1, HFR1, HY5 and PHYA. Light induces dissociation of the SPA1/COP1 complex. Binds to CRY1 in response to blue light, this interaction prevents SPA1/COP1 complex formation but stimulate CRY2/COP1 complex, and thus avoid COP1-dependent degradation of the transcription factor HY5 by the proteasome and promotes hypocotyl elongation.

The protein resides in the nucleus speckle. The protein localises to the nucleus. It is found in the PML body. Functionally, controls normal photoperiodic flowering and regulates circadian rhythms. Required for suppression of photomorphogenesis in dark-grown seedlings and for normal elongation growth of adult plants. Integral component of the COP1/SPA E3 ubiquitin-protein ligase complex. Involved in HY5, HFR1, LAF1 and CO degradation. This is Protein SUPPRESSOR OF PHYA-105 1 (SPA1) from Arabidopsis thaliana (Mouse-ear cress).